Consider the following 227-residue polypeptide: Cytochrome c oxidase subunit 2 (227 aa).

Residues 1-14 are Mitochondrial intermembrane-facing; the sequence is MAYPVQLGFQDAAS. A helical transmembrane segment spans residues 15–45; sequence PIMEELLYFHDHTLMIMFLISSLVLYIISLM. Over 46–59 the chain is Mitochondrial matrix; the sequence is LTTELIHTSTMDAQ. Residues 60-87 form a helical membrane-spanning segment; that stretch reads EVETVWTILPAVILILIALPSLRILYMM. The Mitochondrial intermembrane portion of the chain corresponds to 88-227; sequence DEISTPSLTL…HFEEWLLSML (140 aa). The Cu cation site is built by His-161, Cys-196, Glu-198, Cys-200, His-204, and Met-207. A Mg(2+)-binding site is contributed by Glu-198.

This sequence belongs to the cytochrome c oxidase subunit 2 family. As to quaternary structure, component of the cytochrome c oxidase (complex IV, CIV), a multisubunit enzyme composed of 14 subunits. The complex is composed of a catalytic core of 3 subunits MT-CO1, MT-CO2 and MT-CO3, encoded in the mitochondrial DNA, and 11 supernumerary subunits COX4I, COX5A, COX5B, COX6A, COX6B, COX6C, COX7A, COX7B, COX7C, COX8 and NDUFA4, which are encoded in the nuclear genome. The complex exists as a monomer or a dimer and forms supercomplexes (SCs) in the inner mitochondrial membrane with NADH-ubiquinone oxidoreductase (complex I, CI) and ubiquinol-cytochrome c oxidoreductase (cytochrome b-c1 complex, complex III, CIII), resulting in different assemblies (supercomplex SCI(1)III(2)IV(1) and megacomplex MCI(2)III(2)IV(2)). Found in a complex with TMEM177, COA6, COX18, COX20, SCO1 and SCO2. Interacts with TMEM177 in a COX20-dependent manner. Interacts with COX20. Interacts with COX16. It depends on Cu cation as a cofactor.

It localises to the mitochondrion inner membrane. The catalysed reaction is 4 Fe(II)-[cytochrome c] + O2 + 8 H(+)(in) = 4 Fe(III)-[cytochrome c] + 2 H2O + 4 H(+)(out). In terms of biological role, component of the cytochrome c oxidase, the last enzyme in the mitochondrial electron transport chain which drives oxidative phosphorylation. The respiratory chain contains 3 multisubunit complexes succinate dehydrogenase (complex II, CII), ubiquinol-cytochrome c oxidoreductase (cytochrome b-c1 complex, complex III, CIII) and cytochrome c oxidase (complex IV, CIV), that cooperate to transfer electrons derived from NADH and succinate to molecular oxygen, creating an electrochemical gradient over the inner membrane that drives transmembrane transport and the ATP synthase. Cytochrome c oxidase is the component of the respiratory chain that catalyzes the reduction of oxygen to water. Electrons originating from reduced cytochrome c in the intermembrane space (IMS) are transferred via the dinuclear copper A center (CU(A)) of subunit 2 and heme A of subunit 1 to the active site in subunit 1, a binuclear center (BNC) formed by heme A3 and copper B (CU(B)). The BNC reduces molecular oxygen to 2 water molecules using 4 electrons from cytochrome c in the IMS and 4 protons from the mitochondrial matrix. The sequence is that of Cytochrome c oxidase subunit 2 (MT-CO2) from Eulemur macaco (Black lemur).